A 230-amino-acid polypeptide reads, in one-letter code: Broad-specificity phosphatase YOR283W (230 aa).

H24 serves as the catalytic Tele-phosphohistidine intermediate. Residues 36–37 (QG) and 102–105 (ERYM) each bind substrate. E102 acts as the Proton donor/acceptor in catalysis.

Belongs to the phosphoglycerate mutase family. BPG-dependent PGAM subfamily.

It localises to the cytoplasm. The protein localises to the nucleus. In terms of biological role, metal-independent phosphatase active against a broad range of phosphorylated substrates including nucleoside tri- and diphosphates, phosphorylated organic acids, and amino acids. Shows no activity against phytic acid, phosphorylated carbohydrates, and nucleoside monophosphates. The chain is Broad-specificity phosphatase YOR283W from Saccharomyces cerevisiae (strain ATCC 204508 / S288c) (Baker's yeast).